The following is a 279-amino-acid chain: Large ribosomal subunit protein uL24m (279 aa).

The transit peptide at 1–31 (MRDLRKLIPRLRGPGTNVLKMKKPLPLHMRT) directs the protein to the mitochondrion. Positions 34–51 (REHLNKSDPTVKDDKSAK) are enriched in basic and acidic residues. A disordered region spans residues 34-56 (REHLNKSDPTVKDDKSAKPELPF). The KOW domain maps to 70–100 (KGDYVYVHQGPLKGKWGRVVETNKYTNGITI). Residues 185 to 204 (PRPKTEDKPKDPEGKLDTKN) form a disordered region. Positions 187-202 (PKTEDKPKDPEGKLDT) are enriched in basic and acidic residues.

It belongs to the universal ribosomal protein uL24 family. As to quaternary structure, component of the mitochondrial large ribosomal subunit (mt-LSU). Mature yeast 74S mitochondrial ribosomes consist of a small (37S) and a large (54S) subunit. The 37S small subunit contains a 15S ribosomal RNA (15S mt-rRNA) and at least 32 different proteins. The 54S large subunit contains a 21S rRNA (21S mt-rRNA) and at least 45 different proteins. uL24m forms the wall of the exit tunnel.

The protein resides in the mitochondrion. In terms of biological role, component of the mitochondrial ribosome (mitoribosome), a dedicated translation machinery responsible for the synthesis of mitochondrial genome-encoded proteins, including at least some of the essential transmembrane subunits of the mitochondrial respiratory chain. The mitoribosomes are attached to the mitochondrial inner membrane and translation products are cotranslationally integrated into the membrane. The protein is Large ribosomal subunit protein uL24m (mrpl40) of Schizosaccharomyces pombe (strain 972 / ATCC 24843) (Fission yeast).